A 331-amino-acid polypeptide reads, in one-letter code: Small ribosomal subunit protein uS2 (331 aa).

This sequence belongs to the universal ribosomal protein uS2 family.

The chain is Small ribosomal subunit protein uS2 from Bradyrhizobium diazoefficiens (strain JCM 10833 / BCRC 13528 / IAM 13628 / NBRC 14792 / USDA 110).